Here is a 282-residue protein sequence, read N- to C-terminus: Phosphatidylserine decarboxylase proenzyme (282 aa).

Active-site charge relay system; for autoendoproteolytic cleavage activity residues include Asp85, His142, and Ser244. Residue Ser244 is the Schiff-base intermediate with substrate; via pyruvic acid; for decarboxylase activity of the active site. At Ser244 the chain carries Pyruvic acid (Ser); by autocatalysis.

It belongs to the phosphatidylserine decarboxylase family. PSD-B subfamily. Prokaryotic type I sub-subfamily. As to quaternary structure, heterodimer of a large membrane-associated beta subunit and a small pyruvoyl-containing alpha subunit. It depends on pyruvate as a cofactor. In terms of processing, is synthesized initially as an inactive proenzyme. Formation of the active enzyme involves a self-maturation process in which the active site pyruvoyl group is generated from an internal serine residue via an autocatalytic post-translational modification. Two non-identical subunits are generated from the proenzyme in this reaction, and the pyruvate is formed at the N-terminus of the alpha chain, which is derived from the carboxyl end of the proenzyme. The autoendoproteolytic cleavage occurs by a canonical serine protease mechanism, in which the side chain hydroxyl group of the serine supplies its oxygen atom to form the C-terminus of the beta chain, while the remainder of the serine residue undergoes an oxidative deamination to produce ammonia and the pyruvoyl prosthetic group on the alpha chain. During this reaction, the Ser that is part of the protease active site of the proenzyme becomes the pyruvoyl prosthetic group, which constitutes an essential element of the active site of the mature decarboxylase.

It localises to the cell membrane. The catalysed reaction is a 1,2-diacyl-sn-glycero-3-phospho-L-serine + H(+) = a 1,2-diacyl-sn-glycero-3-phosphoethanolamine + CO2. The protein operates within phospholipid metabolism; phosphatidylethanolamine biosynthesis; phosphatidylethanolamine from CDP-diacylglycerol: step 2/2. In terms of biological role, catalyzes the formation of phosphatidylethanolamine (PtdEtn) from phosphatidylserine (PtdSer). This Coxiella burnetii (strain Dugway 5J108-111) protein is Phosphatidylserine decarboxylase proenzyme.